A 290-amino-acid chain; its full sequence is ATP synthase gamma chain (290 aa).

Belongs to the ATPase gamma chain family. In terms of assembly, F-type ATPases have 2 components, CF(1) - the catalytic core - and CF(0) - the membrane proton channel. CF(1) has five subunits: alpha(3), beta(3), gamma(1), delta(1), epsilon(1). CF(0) has three main subunits: a, b and c.

The protein resides in the cell inner membrane. In terms of biological role, produces ATP from ADP in the presence of a proton gradient across the membrane. The gamma chain is believed to be important in regulating ATPase activity and the flow of protons through the CF(0) complex. This chain is ATP synthase gamma chain, found in Bacteroides fragilis (strain ATCC 25285 / DSM 2151 / CCUG 4856 / JCM 11019 / LMG 10263 / NCTC 9343 / Onslow / VPI 2553 / EN-2).